The primary structure comprises 430 residues: DD-carboxypeptidase/endopeptidase Mpg (430 aa).

The Zn(2+) site is built by His-295, Asp-299, and His-375.

Belongs to the peptidase M23B family. As to quaternary structure, monomer. Zn(2+) serves as cofactor. Likely to be synthesized as a proenzyme. The cleavage of the N-terminal domain is probably required for the activation of the enzyme.

It localises to the cell outer membrane. Its function is as follows. Has both endopeptidase and DD-carboxypeptidase activities. Degrades cell wall peptidoglycan (PG) to allow consummate expression of pili. The sequence is that of DD-carboxypeptidase/endopeptidase Mpg from Neisseria meningitidis serogroup B (strain ATCC BAA-335 / MC58).